A 282-amino-acid chain; its full sequence is Cytochrome c1 (282 aa).

The N-terminal stretch at 1–24 is a signal peptide; that stretch reads MTIKLRFVASLALVFGLAAASVPA. Residues cysteine 62, cysteine 65, histidine 66, and methionine 207 each contribute to the heme c site. The helical transmembrane segment at 253–273 threads the bilayer; the sequence is WWVLGFLVIFTGLLVATKIVV.

In terms of assembly, the main subunits of complex b-c1 are: cytochrome b, cytochrome c1 and the Rieske protein. Binds 1 heme c group covalently per subunit.

It localises to the cell membrane. Functionally, component of the ubiquinol-cytochrome c reductase complex (complex III or cytochrome b-c1 complex), which is a respiratory chain that generates an electrochemical potential coupled to ATP synthesis. c1 functions as an electron donor to cytochrome c. This Blastochloris viridis (Rhodopseudomonas viridis) protein is Cytochrome c1 (petC).